We begin with the raw amino-acid sequence, 338 residues long: S-adenosylmethionine:tRNA ribosyltransferase-isomerase (338 aa).

Belongs to the QueA family. As to quaternary structure, monomer.

It is found in the cytoplasm. The enzyme catalyses 7-aminomethyl-7-carbaguanosine(34) in tRNA + S-adenosyl-L-methionine = epoxyqueuosine(34) in tRNA + adenine + L-methionine + 2 H(+). The protein operates within tRNA modification; tRNA-queuosine biosynthesis. In terms of biological role, transfers and isomerizes the ribose moiety from AdoMet to the 7-aminomethyl group of 7-deazaguanine (preQ1-tRNA) to give epoxyqueuosine (oQ-tRNA). The chain is S-adenosylmethionine:tRNA ribosyltransferase-isomerase from Francisella philomiragia subsp. philomiragia (strain ATCC 25017 / CCUG 19701 / FSC 153 / O#319-036).